The sequence spans 474 residues: Pleckstrin homology domain-containing family S member 1 (474 aa).

The PH domain occupies 20–135 (EVHKRDYFIK…WVSFMTPYCQ (116 aa)). Disordered stretches follow at residues 232 to 251 (IAGPNDSGDSIESNSPDQGF), 272 to 321 (STSA…DDQK), and 449 to 474 (RDLPELERTPKRSPAIKKSQKEAAGE). Positions 238 to 248 (SGDSIESNSPD) are enriched in polar residues. The segment covering 449–458 (RDLPELERTP) has biased composition (basic and acidic residues).

This chain is Pleckstrin homology domain-containing family S member 1, found in Mus musculus (Mouse).